Reading from the N-terminus, the 457-residue chain is Siroheme synthase (457 aa).

The interval 1–204 (MDHLPIFCQL…NDQKAITETT (204 aa)) is precorrin-2 dehydrogenase /sirohydrochlorin ferrochelatase. NAD(+)-binding positions include 22–23 (DV) and 43–44 (LA). A Phosphoserine modification is found at Ser128. The uroporphyrinogen-III C-methyltransferase stretch occupies residues 216–457 (GEVVLVGAGP…RDKLNWFSNH (242 aa)). Residue Pro225 participates in S-adenosyl-L-methionine binding. The Proton acceptor role is filled by Asp248. The active-site Proton donor is the Lys270. Residues 301-303 (GGD), Ile306, 331-332 (TA), Met382, and Gly411 each bind S-adenosyl-L-methionine.

The protein in the N-terminal section; belongs to the precorrin-2 dehydrogenase / sirohydrochlorin ferrochelatase family. In the C-terminal section; belongs to the precorrin methyltransferase family.

The catalysed reaction is uroporphyrinogen III + 2 S-adenosyl-L-methionine = precorrin-2 + 2 S-adenosyl-L-homocysteine + H(+). The enzyme catalyses precorrin-2 + NAD(+) = sirohydrochlorin + NADH + 2 H(+). It carries out the reaction siroheme + 2 H(+) = sirohydrochlorin + Fe(2+). Its pathway is cofactor biosynthesis; adenosylcobalamin biosynthesis; precorrin-2 from uroporphyrinogen III: step 1/1. The protein operates within cofactor biosynthesis; adenosylcobalamin biosynthesis; sirohydrochlorin from precorrin-2: step 1/1. It functions in the pathway porphyrin-containing compound metabolism; siroheme biosynthesis; precorrin-2 from uroporphyrinogen III: step 1/1. It participates in porphyrin-containing compound metabolism; siroheme biosynthesis; siroheme from sirohydrochlorin: step 1/1. Its pathway is porphyrin-containing compound metabolism; siroheme biosynthesis; sirohydrochlorin from precorrin-2: step 1/1. Multifunctional enzyme that catalyzes the SAM-dependent methylations of uroporphyrinogen III at position C-2 and C-7 to form precorrin-2 via precorrin-1. Then it catalyzes the NAD-dependent ring dehydrogenation of precorrin-2 to yield sirohydrochlorin. Finally, it catalyzes the ferrochelation of sirohydrochlorin to yield siroheme. This is Siroheme synthase from Escherichia coli O17:K52:H18 (strain UMN026 / ExPEC).